The sequence spans 229 residues: Growth factor receptor-bound protein 2-A (229 aa).

Positions 1–58 (MEAIAKYDFKATADDELSFKRGDVLKVLNEECDQNWYKAELNGKDGFIPKNYIEMKAH) constitute an SH3 1 domain. Residues 60-152 (WFFGKIPRAK…NQQIFLRDIE (93 aa)) enclose the SH2 domain. The region spanning 168–227 (QQPTYVQALFDFDPQEDGELGFRRGDFIQVVDNSDPNWWKGTCLSQTGMFPRNYVTPVNR) is the SH3 2 domain.

It belongs to the GRB2/sem-5/DRK family.

Its subcellular location is the nucleus. It is found in the cytoplasm. The protein resides in the endosome. It localises to the golgi apparatus. Functionally, adapter protein that provides a critical link between cell surface growth factor receptors and the Ras signaling pathway. Promotes meiotic reinitiation during oocyte maturation. This chain is Growth factor receptor-bound protein 2-A (grb2-a), found in Xenopus laevis (African clawed frog).